Consider the following 147-residue polypeptide: UPF0306 protein YhbP (147 aa).

Belongs to the UPF0306 family.

This chain is UPF0306 protein YhbP, found in Escherichia coli O8 (strain IAI1).